The primary structure comprises 232 residues: Ribose-5-phosphate isomerase A (232 aa).

Substrate-binding positions include threonine 28–threonine 31, aspartate 83–aspartate 86, and lysine 96–glycine 99. Residue glutamate 105 is the Proton acceptor of the active site. Residue lysine 123 participates in substrate binding.

This sequence belongs to the ribose 5-phosphate isomerase family. In terms of assembly, homodimer.

It catalyses the reaction aldehydo-D-ribose 5-phosphate = D-ribulose 5-phosphate. It participates in carbohydrate degradation; pentose phosphate pathway; D-ribose 5-phosphate from D-ribulose 5-phosphate (non-oxidative stage): step 1/1. Its function is as follows. Catalyzes the reversible conversion of ribose-5-phosphate to ribulose 5-phosphate. The chain is Ribose-5-phosphate isomerase A from Rhizobium etli (strain ATCC 51251 / DSM 11541 / JCM 21823 / NBRC 15573 / CFN 42).